Reading from the N-terminus, the 196-residue chain is ATP-dependent Clp protease proteolytic subunit (196 aa).

The active-site Nucleophile is serine 98. Residue histidine 123 is part of the active site.

This sequence belongs to the peptidase S14 family. In terms of assembly, fourteen ClpP subunits assemble into 2 heptameric rings which stack back to back to give a disk-like structure with a central cavity, resembling the structure of eukaryotic proteasomes.

It localises to the cytoplasm. It catalyses the reaction Hydrolysis of proteins to small peptides in the presence of ATP and magnesium. alpha-casein is the usual test substrate. In the absence of ATP, only oligopeptides shorter than five residues are hydrolyzed (such as succinyl-Leu-Tyr-|-NHMec, and Leu-Tyr-Leu-|-Tyr-Trp, in which cleavage of the -Tyr-|-Leu- and -Tyr-|-Trp bonds also occurs).. Functionally, cleaves peptides in various proteins in a process that requires ATP hydrolysis. Has a chymotrypsin-like activity. Plays a major role in the degradation of misfolded proteins. The chain is ATP-dependent Clp protease proteolytic subunit from Actinobacillus pleuropneumoniae serotype 7 (strain AP76).